The chain runs to 308 residues: Glycine--tRNA ligase alpha subunit (308 aa).

Belongs to the class-II aminoacyl-tRNA synthetase family. Tetramer of two alpha and two beta subunits.

Its subcellular location is the cytoplasm. The enzyme catalyses tRNA(Gly) + glycine + ATP = glycyl-tRNA(Gly) + AMP + diphosphate. This Brevibacillus brevis (strain 47 / JCM 6285 / NBRC 100599) protein is Glycine--tRNA ligase alpha subunit.